Consider the following 161-residue polypeptide: F-box only protein 48 (161 aa).

The tract at residues 1 to 25 (MKKTSKKNNNFKIPGTELNSADAER) is disordered. One can recognise an F-box domain in the interval 32–79 (RNFVELLPLEVTYKIFSQLDIQSLCRASRTCTGWNCAIRNNDSLWKPH).

This Mus musculus (Mouse) protein is F-box only protein 48 (Fbxo48).